A 239-amino-acid polypeptide reads, in one-letter code: Large ribosomal subunit protein eL32 (239 aa).

Acidic residues-rich tracts occupy residues 1-12 (MSDENDTPEELA) and 67-91 (VEADTDAEVEEVGGDDEADTDADVE). 2 disordered regions span residues 1 to 23 (MSDENDTPEELADISGVGPSKAE) and 64 to 178 (GLEV…HPSG). Over residues 92–113 (TELRARGLTEKTPDLSEDEQRL) the composition is skewed to basic and acidic residues. Basic residues predominate over residues 130–155 (YHKKKRTPTSWRRPKGTLSKQRRGIK).

Belongs to the eukaryotic ribosomal protein eL32 family.

In Halobacterium salinarum (strain ATCC 700922 / JCM 11081 / NRC-1) (Halobacterium halobium), this protein is Large ribosomal subunit protein eL32 (rpl32e).